The primary structure comprises 354 residues: Uroporphyrinogen decarboxylase (354 aa).

Substrate is bound by residues 27 to 31, aspartate 77, tyrosine 154, threonine 209, and histidine 327; that span reads RQAGR.

It belongs to the uroporphyrinogen decarboxylase family. In terms of assembly, homodimer.

Its subcellular location is the cytoplasm. It carries out the reaction uroporphyrinogen III + 4 H(+) = coproporphyrinogen III + 4 CO2. The protein operates within porphyrin-containing compound metabolism; protoporphyrin-IX biosynthesis; coproporphyrinogen-III from 5-aminolevulinate: step 4/4. In terms of biological role, catalyzes the decarboxylation of four acetate groups of uroporphyrinogen-III to yield coproporphyrinogen-III. The chain is Uroporphyrinogen decarboxylase from Escherichia coli O81 (strain ED1a).